A 61-amino-acid chain; its full sequence is Large ribosomal subunit protein uL30 (61 aa).

The interval 1 to 20 (MSQKKVTVRQVGSPIGRKPE) is disordered.

The protein belongs to the universal ribosomal protein uL30 family. Part of the 50S ribosomal subunit.

The polypeptide is Large ribosomal subunit protein uL30 (Hyphomonas neptunium (strain ATCC 15444)).